The following is a 281-amino-acid chain: Undecaprenyl-diphosphatase (281 aa).

The next 6 membrane-spanning stretches (helical) occupy residues 90–110, 113–133, 147–167, 191–211, 217–237, and 257–277; these read WLVT…QDSI, VLRG…VLGA, LSWK…IPGV, SFLL…YDEL, IAWV…YAVI, and IAAA…AFQG.

This sequence belongs to the UppP family.

The protein localises to the cell membrane. It carries out the reaction di-trans,octa-cis-undecaprenyl diphosphate + H2O = di-trans,octa-cis-undecaprenyl phosphate + phosphate + H(+). Catalyzes the dephosphorylation of undecaprenyl diphosphate (UPP). Confers resistance to bacitracin. The protein is Undecaprenyl-diphosphatase of Kineococcus radiotolerans (strain ATCC BAA-149 / DSM 14245 / SRS30216).